The primary structure comprises 341 residues: UDP-glucuronic acid decarboxylase 5 (341 aa).

Residues Met-1–Asn-21 form a disordered region. Asp-60–Asp-85 is an NAD(+) binding site. Arg-169 is a binding site for substrate. Tyr-172 serves as the catalytic Proton acceptor. Tyr-172–Lys-176 serves as a coordination point for NAD(+). Asn-201 is a binding site for substrate. Position 213 (Arg-213) interacts with NAD(+). Residues Val-214–Phe-218, Gln-231–Arg-238, and Asp-298–Arg-302 contribute to the substrate site.

This sequence belongs to the NAD(P)-dependent epimerase/dehydratase family. UDP-glucuronic acid decarboxylase subfamily. NAD(+) is required as a cofactor.

The protein resides in the cytoplasm. It catalyses the reaction UDP-alpha-D-glucuronate + H(+) = UDP-alpha-D-xylose + CO2. It participates in nucleotide-sugar biosynthesis; UDP-alpha-D-xylose biosynthesis; UDP-alpha-D-xylose from UDP-alpha-D-glucuronate: step 1/1. Functionally, catalyzes the NAD-dependent decarboxylation of UDP-glucuronic acid to UDP-xylose. Necessary for the biosynthesis of the core tetrasaccharide in glycosaminoglycan biosynthesis. The chain is UDP-glucuronic acid decarboxylase 5 (UXS5) from Arabidopsis thaliana (Mouse-ear cress).